Here is a 403-residue protein sequence, read N- to C-terminus: MAIIHPKVRGFICTTTHPKGCELNVRDQIEATRKLGVREDGPKKVLVIGASSGYGLAARITAAFGFKADTLGVFFEKPGTETKAGTAGWYNSAAFDKFAKAEGLYSKSINGDAFSDEARAKVIELIKNEMGGKVDLVIYSLASPVRKLPQTGEVIRSALKPIGEPYKSTAIDTNKDTIIEASIEPATEQEIADTVTVMGGQDWQLWIDALAGANVLAEGARTVAFSYIGSDITWPIYWHGALGQAKQDLDETALRLDQKLADEVKGGANVAVLKSVVTQASSAIPVMPLYLSMVFKIMQEKGIHEGTQNQLDRMYRDRMYRADGAPADVDEKGRLRLDDWELRDDVQTACKALWPQVTTENLFELTDYAGYKKQFLNLFGFERADVNYDEDVATDVKFDCIEL.

NAD(+) is bound by residues 49–54, 75–76, 112–113, and 141–142; these read GASSGY, FE, DA, and LA. Residue Y227 participates in substrate binding. Y237 serves as the catalytic Proton donor. NAD(+)-binding positions include K246 and 276-278; that span reads VVT.

It belongs to the TER reductase family. Monomer.

It catalyses the reaction a 2,3-saturated acyl-[ACP] + NAD(+) = a (2E)-enoyl-[ACP] + NADH + H(+). It functions in the pathway lipid metabolism; fatty acid biosynthesis. Functionally, involved in the final reduction of the elongation cycle of fatty acid synthesis (FAS II). Catalyzes the reduction of a carbon-carbon double bond in an enoyl moiety that is covalently linked to an acyl carrier protein (ACP). The protein is Enoyl-[acyl-carrier-protein] reductase [NADH] of Pseudomonas putida (strain GB-1).